The sequence spans 422 residues: Zinc-regulated transporter 2 (422 aa).

Residues 1–27 are Extracellular-facing; the sequence is MVDLIARDDSVDTCQASNGYNGHAGLR. A helical transmembrane segment spans residues 28–48; sequence ILAVFIILISSGLGVYFPILS. The Cytoplasmic segment spans residues 49 to 60; that stretch reads SRYSFIRLPNWC. A helical transmembrane segment spans residues 61 to 81; the sequence is FFIAKFFGSGVIVATAFVHLL. At 82 to 99 the chain is on the extracellular side; it reads QPAAEALGDECLGGTFAE. A helical membrane pass occupies residues 100–120; sequence YPWAFGICLMSLFLLFFTEII. Over 121–262 the chain is Cytoplasmic; it reads THYFVAKTLG…EEDKEQYLNQ (142 aa). A phosphoserine mark is found at Ser148, Ser149, Ser162, and Ser170. Thr188 is modified (phosphothreonine). The chain crosses the membrane as a helical span at residues 263 to 283; it reads ILAVFILEFGIIFHSVFVGLS. The Extracellular portion of the chain corresponds to 284-290; sequence LSVAGEE. Residues 291–311 form a helical membrane-spanning segment; it reads FETLFIVLTFHQMFEGLGLGT. The Cytoplasmic portion of the chain corresponds to 312-326; it reads RVAETNWPESKKYMP. The chain crosses the membrane as a helical span at residues 327-347; that stretch reads WLMGLAFTLTSPIAVAVGIGV. Over 348–358 the chain is Extracellular; that stretch reads RHSWIPGSRRA. The helical transmembrane segment at 359–379 threads the bilayer; it reads LIANGVFDSISSGILIYTGLV. The Cytoplasmic portion of the chain corresponds to 380–400; it reads ELMAHEFLYSNQFKGPDGLKK. The chain crosses the membrane as a helical span at residues 401–421; the sequence is MLSAYLIMCCGAALMALLGKW. Position 422 (Ala422) is a topological domain, extracellular.

It belongs to the ZIP transporter (TC 2.A.5) family.

It is found in the membrane. Its function is as follows. Low-affinity zinc transport protein. Active in zinc-replete cells and is time-, temperature- and concentration-dependent and prefers zinc over other metals as its substrate. The chain is Zinc-regulated transporter 2 (ZRT2) from Saccharomyces cerevisiae (strain ATCC 204508 / S288c) (Baker's yeast).